A 32-amino-acid chain; its full sequence is Phallacidin proprotein (32 aa).

Residues Met1–Pro10 constitute a propeptide that is removed on maturation. Residues Ala11 to Pro17 constitute a cross-link (cyclopeptide (Ala-Pro)). The 2'-cysteinyl-6'-hydroxytryptophan sulfoxide (Trp-Cys) cross-link spans Trp12–Cys16. Residues Cys18–Lys32 constitute a propeptide that is removed on maturation.

It belongs to the MSDIN fungal toxin family. Post-translationally, processed by the macrocyclase-peptidase enzyme POPB to yield a toxic cyclic heptapeptide. POPB first removes 10 residues from the N-terminus. Conformational trapping of the remaining peptide forces the enzyme to release this intermediate rather than proceed to macrocyclization. The enzyme rebinds the remaining peptide in a different conformation and catalyzes macrocyclization of the N-terminal 7 residues.

Functionally, major toxin that belongs to the bicyclic heptapeptides called phallotoxins. Although structurally related to amatoxins, phallotoxins have a different mode of action, which is the stabilization of F-actin. Phallotoxins are poisonous when administered parenterally, but not orally because of poor absorption. The polypeptide is Phallacidin proprotein (Amanita pallidorosea).